We begin with the raw amino-acid sequence, 108 residues long: uncharacterized protein (108 aa).

A compositionally biased stretch (low complexity) spans 39-68 (GLRSRSGTGSGNSRNGLKESGGSRSGPGKP). The interval 39–95 (GLRSRSGTGSGNSRNGLKESGGSRSGPGKPRGNRKSSRRIRPRPTSEKPRGYWRSSW) is disordered. Residues 69-80 (RGNRKSSRRIRP) show a composition bias toward basic residues.

This is an uncharacterized protein from Acidithiobacillus ferridurans.